A 452-amino-acid polypeptide reads, in one-letter code: 5'-nucleotidase domain-containing protein 1 (452 aa).

The active-site Nucleophile is the Asp-16. Mg(2+) contacts are provided by Asp-16 and Asp-18. Asp-18 acts as the Proton donor in catalysis. Lys-171 carries the N6-acetyllysine modification. A Mg(2+)-binding site is contributed by Asp-313. Over residues 339 to 361 (GDKDGKPEESEPEEKKGKYEGSK) the composition is skewed to basic and acidic residues. The tract at residues 339-365 (GDKDGKPEESEPEEKKGKYEGSKAKPL) is disordered.

The protein belongs to the 5'(3')-deoxyribonucleotidase family.

This is 5'-nucleotidase domain-containing protein 1 (NT5DC1) from Bos taurus (Bovine).